Reading from the N-terminus, the 199-residue chain is Adenine phosphoribosyltransferase (199 aa).

The protein belongs to the purine/pyrimidine phosphoribosyltransferase family. As to quaternary structure, homodimer.

It localises to the cytoplasm. The enzyme catalyses AMP + diphosphate = 5-phospho-alpha-D-ribose 1-diphosphate + adenine. The protein operates within purine metabolism; AMP biosynthesis via salvage pathway; AMP from adenine: step 1/1. Functionally, catalyzes a salvage reaction resulting in the formation of AMP, that is energically less costly than de novo synthesis. The chain is Adenine phosphoribosyltransferase from Rhodopseudomonas palustris (strain BisB18).